A 254-amino-acid chain; its full sequence is 3-oxo-5-alpha-steroid 4-dehydrogenase 2 (254 aa).

Helical transmembrane passes span 8 to 28, 72 to 92, 146 to 166, and 206 to 226; these read SPVLAGSATLVALGALALYVA, PLSLFGPPGTVLLGLFCLHYF, FSLGVFLFILGMGINIHSDYI, and LATWSLPALAFAFFSLCFLGL.

This sequence belongs to the steroid 5-alpha reductase family. As to expression, expressed in high levels in the prostate and many other androgen-sensitive tissues.

It is found in the microsome membrane. It localises to the endoplasmic reticulum membrane. The catalysed reaction is a 3-oxo-5alpha-steroid + NADP(+) = a 3-oxo-Delta(4)-steroid + NADPH + H(+). The enzyme catalyses 17beta-hydroxy-5alpha-androstan-3-one + NADP(+) = testosterone + NADPH + H(+). It catalyses the reaction 5alpha-pregnane-3,20-dione + NADP(+) = progesterone + NADPH + H(+). Functionally, converts testosterone (T) into 5-alpha-dihydrotestosterone (DHT) and progesterone or corticosterone into their corresponding 5-alpha-3-oxosteroids. It plays a central role in sexual differentiation and androgen physiology. The sequence is that of 3-oxo-5-alpha-steroid 4-dehydrogenase 2 (SRD5A2) from Homo sapiens (Human).